Consider the following 189-residue polypeptide: Pyridoxal 5'-phosphate synthase subunit PdxT (189 aa).

Position 48–50 (48–50 (GES)) interacts with L-glutamine. Catalysis depends on Cys80, which acts as the Nucleophile. Residues Arg107 and 136–137 (IR) each bind L-glutamine. Active-site charge relay system residues include His172 and Glu174.

Belongs to the glutaminase PdxT/SNO family. In terms of assembly, in the presence of PdxS, forms a dodecamer of heterodimers. Only shows activity in the heterodimer.

It carries out the reaction aldehydo-D-ribose 5-phosphate + D-glyceraldehyde 3-phosphate + L-glutamine = pyridoxal 5'-phosphate + L-glutamate + phosphate + 3 H2O + H(+). The enzyme catalyses L-glutamine + H2O = L-glutamate + NH4(+). The protein operates within cofactor biosynthesis; pyridoxal 5'-phosphate biosynthesis. In terms of biological role, catalyzes the hydrolysis of glutamine to glutamate and ammonia as part of the biosynthesis of pyridoxal 5'-phosphate. The resulting ammonia molecule is channeled to the active site of PdxS. In Ruminiclostridium cellulolyticum (strain ATCC 35319 / DSM 5812 / JCM 6584 / H10) (Clostridium cellulolyticum), this protein is Pyridoxal 5'-phosphate synthase subunit PdxT.